The following is an 896-amino-acid chain: MNYKDTLLMPKTDFEMRGNLGKREPEIQKHWESIDLYNKVLEKNKDNTPFVLHDGPPYANNNIHIGHAFQKTLKDFVLRYQTMSGRYTPYIPGWDTHGLPIENEVTKSGVDRKQLTRAEFRKICREYAIKQVEVQRAQFKRLGILGDWDNPYLTLDKSYIADQVRVFSQMVDKGIIYKGLKPIYWSPSSESAFAEAEIEYMDKQSKSIYVGFDMMGDKFPNTKLLIWTTTPWTLPANLAVSVHPNFDYVWFNNDGKNYIALKELLPKLVEKLGFSHAKVLKEFKGSTLEFMNYKHPLYDRVSPIILGEHVTAEDGTGLVHTAPGHGEDDYFVGKKYNLDLLSPVDEKGHMTEEAGPYAGMFYEKANAQIVEDLRENGHLLYDETITHSYPHDWRTKKPVIFRSTPQWFASIDMLKGDLLEAIKGVKWHTSWGEVRLTNMIKDRNDWVISRQRVWGVPIPIFYDNENNPLLDRKLIDHVASLFEVHGSDIWYEWDVEKLLPSDYEGPRDLTKELDIMDVWFDSGTSYNILKRRGLPFPADMYLEGSDQYRGWFNSSLTTAIAVDGVSPYKEIVSHGFVLDGKGRKMSKSLGNVIDPLTVMNDQGADVLRLWVASVDYEADVRISNDLMKQVSESYRKFRNTFRFMLGVLDGFNPEVNYIGWSMRGQLNRVMTDKYYVLATKVNESYAKYNFVEVTRLIIPFVVNDLSAFYLDYTKDSLYCDAEDDFERRAIQSTIYDILLGLLRLLTPIMPHTTSEAYDSLKYKEYDNIYLEKMPIGGKLKEPKLQENYDIFDELRNHVLKHLELAREAKVIGKSLDAHLDLSVDQTTYDALEYLDLLNKLDKILIVSSVHITKADQLDIKVSKADGHVCARCWNIVKEVNQNDVCVRCESVLEGLK.

Positions 57 to 67 (PYANNNIHIGH) match the 'HIGH' region motif. Glu-543 is a binding site for L-isoleucyl-5'-AMP. A 'KMSKS' region motif is present at residues 584–588 (KMSKS). Lys-587 serves as a coordination point for ATP. The Zn(2+) site is built by Cys-869, Cys-872, Cys-885, and Cys-888.

This sequence belongs to the class-I aminoacyl-tRNA synthetase family. IleS type 1 subfamily. In terms of assembly, monomer. Zn(2+) serves as cofactor.

Its subcellular location is the cytoplasm. It catalyses the reaction tRNA(Ile) + L-isoleucine + ATP = L-isoleucyl-tRNA(Ile) + AMP + diphosphate. Functionally, catalyzes the attachment of isoleucine to tRNA(Ile). As IleRS can inadvertently accommodate and process structurally similar amino acids such as valine, to avoid such errors it has two additional distinct tRNA(Ile)-dependent editing activities. One activity is designated as 'pretransfer' editing and involves the hydrolysis of activated Val-AMP. The other activity is designated 'posttransfer' editing and involves deacylation of mischarged Val-tRNA(Ile). The sequence is that of Isoleucine--tRNA ligase from Acholeplasma laidlawii (strain PG-8A).